We begin with the raw amino-acid sequence, 202 residues long: Outer-membrane lipoprotein LolB (202 aa).

Residues 1 to 18 (MFRRTYFWLMLLPLFMVG) form the signal peptide. The N-palmitoyl cysteine moiety is linked to residue C19. C19 carries S-diacylglycerol cysteine lipidation.

The protein belongs to the LolB family. Monomer.

Its subcellular location is the cell outer membrane. Its function is as follows. Plays a critical role in the incorporation of lipoproteins in the outer membrane after they are released by the LolA protein. The chain is Outer-membrane lipoprotein LolB from Vibrio vulnificus (strain YJ016).